The primary structure comprises 514 residues: GMP synthase [glutamine-hydrolyzing] (514 aa).

The 191-residue stretch at 9–199 (MILVLDFGGQ…LFEVCQCTGD (191 aa)) folds into the Glutamine amidotransferase type-1 domain. Catalysis depends on cysteine 86, which acts as the Nucleophile. Active-site residues include histidine 173 and glutamate 175. One can recognise a GMPS ATP-PPase domain in the interval 200–389 (WSMENFIEIE…LGLSDEIVWR (190 aa)). 227–233 (SGGVDSS) provides a ligand contact to ATP.

Homodimer.

The catalysed reaction is XMP + L-glutamine + ATP + H2O = GMP + L-glutamate + AMP + diphosphate + 2 H(+). The protein operates within purine metabolism; GMP biosynthesis; GMP from XMP (L-Gln route): step 1/1. Catalyzes the synthesis of GMP from XMP. This Exiguobacterium sibiricum (strain DSM 17290 / CCUG 55495 / CIP 109462 / JCM 13490 / 255-15) protein is GMP synthase [glutamine-hydrolyzing].